A 334-amino-acid polypeptide reads, in one-letter code: 6-phosphogluconolactonase (334 aa).

It belongs to the cycloisomerase 2 family.

It catalyses the reaction 6-phospho-D-glucono-1,5-lactone + H2O = 6-phospho-D-gluconate + H(+). It functions in the pathway carbohydrate degradation; pentose phosphate pathway; D-ribulose 5-phosphate from D-glucose 6-phosphate (oxidative stage): step 2/3. In terms of biological role, catalyzes the hydrolysis of 6-phosphogluconolactone to 6-phosphogluconate. The polypeptide is 6-phosphogluconolactonase (Yersinia pseudotuberculosis serotype O:1b (strain IP 31758)).